The primary structure comprises 351 residues: MFRLKPLISVDLNQTMSLLRRFVKEANNSRFLLQSISGRSFSTVNPNPTASPGRRTCVEFDNLIFKAGSSGDFEAVRRLLNSRVVNACFNTTATFKFLTNTDSYSSSLEDLRRILPQTDAGYTRKHSYETLIARLCKLGRIDDALVLINDMAIGEFGLSTCVFHPILNTLTKKNRIEEAWRVVELMRSHAIPVDVTSYNYFLTSHCYDGDVAEASRVLRKMEEEEEGVMSPDTRTYDALVLGACKSGRVEAAMAILRRMEEEGLSVLYATHAHVIGEMVESGYYALSVEFVMAYAGKDKRLDEENLGSLASKLIKRKRFKEAKMVLKEMSVRGLRMGDALREFHEKNVLQS.

The transit peptide at 1–41 (MFRLKPLISVDLNQTMSLLRRFVKEANNSRFLLQSISGRSF) directs the protein to the mitochondrion. 4 PPR repeats span residues 124 to 158 (RKHS…EFGL), 159 to 193 (STCV…AIPV), 194 to 224 (DVTS…MEEE), and 232 to 266 (DTRT…GLSV).

The protein belongs to the PPR family. P subfamily.

The protein resides in the mitochondrion. The polypeptide is Pentatricopeptide repeat-containing protein At3g56030, mitochondrial (Arabidopsis thaliana (Mouse-ear cress)).